Consider the following 415-residue polypeptide: Histidine--tRNA ligase (415 aa).

This sequence belongs to the class-II aminoacyl-tRNA synthetase family. Homodimer.

It localises to the cytoplasm. The enzyme catalyses tRNA(His) + L-histidine + ATP = L-histidyl-tRNA(His) + AMP + diphosphate + H(+). The protein is Histidine--tRNA ligase of Rickettsia canadensis (strain McKiel).